Reading from the N-terminus, the 455-residue chain is Probable glycine dehydrogenase (decarboxylating) subunit 1 (455 aa).

Belongs to the GcvP family. N-terminal subunit subfamily. The glycine cleavage system is composed of four proteins: P, T, L and H. In this organism, the P 'protein' is a heterodimer of two subunits.

The enzyme catalyses N(6)-[(R)-lipoyl]-L-lysyl-[glycine-cleavage complex H protein] + glycine + H(+) = N(6)-[(R)-S(8)-aminomethyldihydrolipoyl]-L-lysyl-[glycine-cleavage complex H protein] + CO2. The glycine cleavage system catalyzes the degradation of glycine. The P protein binds the alpha-amino group of glycine through its pyridoxal phosphate cofactor; CO(2) is released and the remaining methylamine moiety is then transferred to the lipoamide cofactor of the H protein. The chain is Probable glycine dehydrogenase (decarboxylating) subunit 1 from Francisella tularensis subsp. tularensis (strain FSC 198).